The chain runs to 264 residues: Thymidylate synthase (264 aa).

Position 21 (arginine 21) interacts with dUMP. A (6R)-5,10-methylene-5,6,7,8-tetrahydrofolate-binding site is contributed by histidine 51. 126 to 127 (RR) contributes to the dUMP binding site. Catalysis depends on cysteine 146, which acts as the Nucleophile. DUMP is bound by residues 166–169 (RSAD), asparagine 177, and 207–209 (HLY). Aspartate 169 lines the (6R)-5,10-methylene-5,6,7,8-tetrahydrofolate pocket. Alanine 263 is a binding site for (6R)-5,10-methylene-5,6,7,8-tetrahydrofolate.

Belongs to the thymidylate synthase family. Bacterial-type ThyA subfamily. Homodimer.

It localises to the cytoplasm. The catalysed reaction is dUMP + (6R)-5,10-methylene-5,6,7,8-tetrahydrofolate = 7,8-dihydrofolate + dTMP. The protein operates within pyrimidine metabolism; dTTP biosynthesis. Functionally, catalyzes the reductive methylation of 2'-deoxyuridine-5'-monophosphate (dUMP) to 2'-deoxythymidine-5'-monophosphate (dTMP) while utilizing 5,10-methylenetetrahydrofolate (mTHF) as the methyl donor and reductant in the reaction, yielding dihydrofolate (DHF) as a by-product. This enzymatic reaction provides an intracellular de novo source of dTMP, an essential precursor for DNA biosynthesis. The protein is Thymidylate synthase of Allorhizobium ampelinum (strain ATCC BAA-846 / DSM 112012 / S4) (Agrobacterium vitis (strain S4)).